Reading from the N-terminus, the 362-residue chain is S-adenosylmethionine:tRNA ribosyltransferase-isomerase (362 aa).

The protein belongs to the QueA family. In terms of assembly, monomer.

The protein resides in the cytoplasm. The enzyme catalyses 7-aminomethyl-7-carbaguanosine(34) in tRNA + S-adenosyl-L-methionine = epoxyqueuosine(34) in tRNA + adenine + L-methionine + 2 H(+). It participates in tRNA modification; tRNA-queuosine biosynthesis. Functionally, transfers and isomerizes the ribose moiety from AdoMet to the 7-aminomethyl group of 7-deazaguanine (preQ1-tRNA) to give epoxyqueuosine (oQ-tRNA). In Methylobacterium sp. (strain 4-46), this protein is S-adenosylmethionine:tRNA ribosyltransferase-isomerase.